Here is a 711-residue protein sequence, read N- to C-terminus: Ribosomal RNA large subunit methyltransferase K/L (711 aa).

The region spanning 43–154 is the THUMP domain; it reads LGYRITLWSR…RGQITIGLNF (112 aa).

It belongs to the methyltransferase superfamily. RlmKL family.

Its subcellular location is the cytoplasm. It catalyses the reaction guanosine(2445) in 23S rRNA + S-adenosyl-L-methionine = N(2)-methylguanosine(2445) in 23S rRNA + S-adenosyl-L-homocysteine + H(+). The enzyme catalyses guanosine(2069) in 23S rRNA + S-adenosyl-L-methionine = N(2)-methylguanosine(2069) in 23S rRNA + S-adenosyl-L-homocysteine + H(+). Its function is as follows. Specifically methylates the guanine in position 2445 (m2G2445) and the guanine in position 2069 (m7G2069) of 23S rRNA. This chain is Ribosomal RNA large subunit methyltransferase K/L, found in Shewanella woodyi (strain ATCC 51908 / MS32).